The following is a 426-amino-acid chain: Serine hydroxymethyltransferase (426 aa).

(6S)-5,6,7,8-tetrahydrofolate is bound by residues L121 and 125–127; that span reads GHL. K230 is modified (N6-(pyridoxal phosphate)lysine). Residue 354–356 coordinates (6S)-5,6,7,8-tetrahydrofolate; sequence SPF.

It belongs to the SHMT family. As to quaternary structure, homodimer. Pyridoxal 5'-phosphate is required as a cofactor.

It localises to the cytoplasm. It carries out the reaction (6R)-5,10-methylene-5,6,7,8-tetrahydrofolate + glycine + H2O = (6S)-5,6,7,8-tetrahydrofolate + L-serine. Its pathway is one-carbon metabolism; tetrahydrofolate interconversion. It functions in the pathway amino-acid biosynthesis; glycine biosynthesis; glycine from L-serine: step 1/1. Its function is as follows. Catalyzes the reversible interconversion of serine and glycine with tetrahydrofolate (THF) serving as the one-carbon carrier. This reaction serves as the major source of one-carbon groups required for the biosynthesis of purines, thymidylate, methionine, and other important biomolecules. Also exhibits THF-independent aldolase activity toward beta-hydroxyamino acids, producing glycine and aldehydes, via a retro-aldol mechanism. The polypeptide is Serine hydroxymethyltransferase (Gloeobacter violaceus (strain ATCC 29082 / PCC 7421)).